Reading from the N-terminus, the 777-residue chain is DNA repair helicase/translocase XPB-R (777 aa).

Positions Ala-212–Leu-416 constitute a Helicase ATP-binding domain. ATP is bound at residue Leu-225–Thr-232. The DEVH box motif lies at Asp-369–His-372. Positions Ile-484–Asn-631 constitute a Helicase C-terminal domain.

The protein belongs to the helicase family. RAD25/XPB subfamily.

It carries out the reaction Couples ATP hydrolysis with the unwinding of duplex DNA by translocating in the 3'-5' direction.. It catalyses the reaction ATP + H2O = ADP + phosphate + H(+). Functionally, ATP-dependent 3'-5' DNA helicase/translocase; binds dsDNA rather than ssDNA, unzipping it in a translocase rather than classical helicase activity. Involved in nucleotide excision repair (NER) of damaged DNA. XPB-R is a paralog of XBP, but is not a component of the TFIIH basal transcription factor and is dispensable for RNA polymerase II transcription. The protein is DNA repair helicase/translocase XPB-R of Trypanosoma brucei brucei (strain 927/4 GUTat10.1).